The following is a 341-amino-acid chain: 2-keto-4-carboxy-3-hexenedioate hydratase (341 aa).

Residues histidine 8 and histidine 10 each coordinate Zn(2+). 71–73 lines the substrate pocket; it reads RAS. A Zn(2+)-binding site is contributed by histidine 178. Substrate-binding residues include tyrosine 194 and histidine 223. Catalysis depends on glutamate 284, which acts as the Proton donor/acceptor. A substrate-binding site is contributed by arginine 290.

This sequence belongs to the metallo-dependent hydrolases superfamily. Homodimer. Requires Zn(2+) as cofactor.

It catalyses the reaction (3Z)-2-oxo-4-carboxy-3-hexenedioate + H2O = (2S)-2-hydroxy-4-oxobutane-1,2,4-tricarboxylate. The protein operates within secondary metabolite metabolism; lignin degradation. Contributes to the degradation of lignin at the level of the protocatechuate 4,5-cleavage pathway. Catalyzes the hydration of the double bond of (3Z)-2-keto-4-carboxy-3-hexenedioate (KCH) to (4S)-4-carboxy-4-hydroxy-2-oxoadipate (CHA, also named (2S)-2-hydroxy-4-oxobutane-1,2,4-tricarboxylate). Is involved in the catabolism of both vanillate and syringate. This chain is 2-keto-4-carboxy-3-hexenedioate hydratase, found in Sphingobium sp. (strain NBRC 103272 / SYK-6).